The following is a 367-amino-acid chain: Probable butyrate kinase (367 aa).

Belongs to the acetokinase family.

The protein localises to the cytoplasm. The catalysed reaction is butanoate + ATP = butanoyl phosphate + ADP. The polypeptide is Probable butyrate kinase (Exiguobacterium sibiricum (strain DSM 17290 / CCUG 55495 / CIP 109462 / JCM 13490 / 255-15)).